A 199-amino-acid polypeptide reads, in one-letter code: Proteasome subunit beta type-2-B (199 aa).

Methionine 1 carries the post-translational modification N-acetylmethionine.

It belongs to the peptidase T1B family. As to quaternary structure, component of the 20S core complex of the 26S proteasome. The 26S proteasome is composed of a core protease (CP), known as the 20S proteasome, capped at one or both ends by the 19S regulatory particle (RP/PA700). The 20S proteasome core is composed of 28 subunits that are arranged in four stacked rings, resulting in a barrel-shaped structure. The two end rings are each formed by seven alpha subunits, and the two central rings are each formed by seven beta subunits. The catalytic chamber with the active sites is on the inside of the barrel. In terms of tissue distribution, ubiquitous low levels, higher expression in siliques and flowers.

Its subcellular location is the cytoplasm. The protein resides in the nucleus. Its function is as follows. Non-catalytic component of the proteasome, a multicatalytic proteinase complex which is characterized by its ability to cleave peptides with Arg, Phe, Tyr, Leu, and Glu adjacent to the leaving group at neutral or slightly basic pH. The proteasome has an ATP-dependent proteolytic activity. The chain is Proteasome subunit beta type-2-B (PBD2) from Arabidopsis thaliana (Mouse-ear cress).